A 390-amino-acid polypeptide reads, in one-letter code: Acid protease (390 aa).

The signal sequence occupies residues 1–18 (MLFSKSLLLSVLASLSFA). The 312-residue stretch at 75–386 (YLTTIEIGTP…DIDNSQVGIA (312 aa)) folds into the Peptidase A1 domain. Residues Asp-93 and Asp-282 contribute to the active site.

Belongs to the peptidase A1 family.

This is Acid protease (PEP1) from Saccharomycopsis fibuligera (Yeast).